A 352-amino-acid polypeptide reads, in one-letter code: Putative [LysW]-L-2-aminoadipate 6-phosphate reductase (352 aa).

11 to 14 (SGYT) is an NADP(+) binding site. The active site involves cysteine 148. Asparagine 319 provides a ligand contact to NADP(+).

It belongs to the NAGSA dehydrogenase family. Type 1 subfamily. LysY sub-subfamily.

Its subcellular location is the cytoplasm. It carries out the reaction [amino-group carrier protein]-C-terminal-N-(1-carboxy-5-oxopentan-1-yl)-L-glutamine + phosphate + NADP(+) = [amino-group carrier protein]-C-terminal-N-(1-carboxy-5-phosphooxy-5-oxopentan-1-yl)-L-glutamine + NADPH + H(+). The protein operates within amino-acid biosynthesis; L-lysine biosynthesis via AAA pathway; L-lysine from L-alpha-aminoadipate (Thermus route): step 3/5. Its function is as follows. Catalyzes the NADPH-dependent reduction of [LysW]-aminoadipate 6-phosphate to yield [LysW]-aminoadipate 6-semialdehyde. The chain is Putative [LysW]-L-2-aminoadipate 6-phosphate reductase from Thermomicrobium roseum (strain ATCC 27502 / DSM 5159 / P-2).